The primary structure comprises 192 residues: Epididymal-specific lipocalin-5 (192 aa).

The first 26 residues, 1-26 (MCSVARHMESIMLFTLLGLCVGLAAG), serve as a signal peptide directing secretion. Residues cysteine 89 and cysteine 183 are joined by a disulfide bond.

The protein belongs to the calycin superfamily. Lipocalin family. 2 different forms with differently processed N-termini exist. In terms of tissue distribution, epididymal fluid of the caudal and corpus regions (at protein level).

The protein resides in the secreted. Its function is as follows. Associates with spermatozoa in the epididymal fluid but does not bind tightly to them. Binds both all-trans and 13-cis retinoic acid. May act as a retinoid carrier protein which is required for epididymal function and/or sperm maturation. In Mus musculus (Mouse), this protein is Epididymal-specific lipocalin-5.